Consider the following 72-residue polypeptide: Translation initiation factor IF-1 (72 aa).

An S1-like domain is found at 1 to 72 (MAKEDSIRMQ…NKGRIVYRER (72 aa)).

It belongs to the IF-1 family. As to quaternary structure, component of the 30S ribosomal translation pre-initiation complex which assembles on the 30S ribosome in the order IF-2 and IF-3, IF-1 and N-formylmethionyl-tRNA(fMet); mRNA recruitment can occur at any time during PIC assembly.

It localises to the cytoplasm. Its function is as follows. One of the essential components for the initiation of protein synthesis. Stabilizes the binding of IF-2 and IF-3 on the 30S subunit to which N-formylmethionyl-tRNA(fMet) subsequently binds. Helps modulate mRNA selection, yielding the 30S pre-initiation complex (PIC). Upon addition of the 50S ribosomal subunit IF-1, IF-2 and IF-3 are released leaving the mature 70S translation initiation complex. The chain is Translation initiation factor IF-1 from Halorhodospira halophila (strain DSM 244 / SL1) (Ectothiorhodospira halophila (strain DSM 244 / SL1)).